Reading from the N-terminus, the 339-residue chain is Glycerol-3-phosphate dehydrogenase [NAD(P)+] (339 aa).

Residues serine 15, tyrosine 16, histidine 36, and lysine 110 each coordinate NADPH. 3 residues coordinate sn-glycerol 3-phosphate: lysine 110, glycine 139, and threonine 141. Alanine 143 is a binding site for NADPH. 5 residues coordinate sn-glycerol 3-phosphate: lysine 195, aspartate 248, serine 258, arginine 259, and asparagine 260. Lysine 195 acts as the Proton acceptor in catalysis. Arginine 259 is an NADPH binding site. Residues valine 283 and glutamate 285 each contribute to the NADPH site.

It belongs to the NAD-dependent glycerol-3-phosphate dehydrogenase family.

The protein localises to the cytoplasm. It catalyses the reaction sn-glycerol 3-phosphate + NAD(+) = dihydroxyacetone phosphate + NADH + H(+). The enzyme catalyses sn-glycerol 3-phosphate + NADP(+) = dihydroxyacetone phosphate + NADPH + H(+). Its pathway is membrane lipid metabolism; glycerophospholipid metabolism. In terms of biological role, catalyzes the reduction of the glycolytic intermediate dihydroxyacetone phosphate (DHAP) to sn-glycerol 3-phosphate (G3P), the key precursor for phospholipid synthesis. The protein is Glycerol-3-phosphate dehydrogenase [NAD(P)+] of Yersinia pseudotuberculosis serotype O:1b (strain IP 31758).